We begin with the raw amino-acid sequence, 190 residues long: Segregation and condensation protein B (190 aa).

The protein belongs to the ScpB family. As to quaternary structure, homodimer. Homodimerization may be required to stabilize the binding of ScpA to the Smc head domains. Component of a cohesin-like complex composed of ScpA, ScpB and the Smc homodimer, in which ScpA and ScpB bind to the head domain of Smc. The presence of the three proteins is required for the association of the complex with DNA.

Its subcellular location is the cytoplasm. Its function is as follows. Participates in chromosomal partition during cell division. May act via the formation of a condensin-like complex containing Smc and ScpA that pull DNA away from mid-cell into both cell halves. This chain is Segregation and condensation protein B, found in Bacillus cereus (strain AH187).